Reading from the N-terminus, the 488-residue chain is Histone deacetylase 2 (488 aa).

The tract at residues 9-322 (KKKVCYYYDG…WTYETAVALD (314 aa)) is histone deacetylase. 1D-myo-inositol 1,4,5,6-tetrakisphosphate-binding residues include Gly28 and Lys32. The residue at position 75 (Lys75) is an N6-acetyllysine; alternate. Lys75 participates in a covalent cross-link: Glycyl lysine isopeptide (Lys-Gly) (interchain with G-Cter in SUMO2); alternate. Residue His142 is part of the active site. Residues Asp175, Asp177, His179, Phe188, Thr191, Val194, Ser198, and Phe199 each coordinate Ca(2+). The Zn(2+) site is built by Asp177 and His179. N6-acetyllysine is present on Lys221. Position 223 (Tyr223) interacts with Ca(2+). Cys262 carries the S-nitrosocysteine modification. A Zn(2+)-binding site is contributed by Asp265. Arg271 serves as a coordination point for 1D-myo-inositol 1,4,5,6-tetrakisphosphate. At Cys274 the chain carries S-nitrosocysteine. Positions 389–488 (AVHEDSGDED…GTKSEQLSNP (100 aa)) are disordered. 4 positions are modified to phosphoserine: Ser394, Ser407, Ser422, and Ser424. Residues 402–417 (PDKRISIRASDKRIAC) show a composition bias toward basic and acidic residues. The segment covering 418 to 428 (DEEFSDSEDEG) has biased composition (acidic residues). The span at 429 to 481 (EGGRRNVADHKKGAKKARIEEDKKETEDKKTDVKEEDKSKDNSGEKTDTKGTK) shows a compositional bias: basic and acidic residues. Residues Lys439, Lys452, Lys458, Lys462, Lys478, and Lys481 each participate in a glycyl lysine isopeptide (Lys-Gly) (interchain with G-Cter in SUMO2) cross-link.

Belongs to the histone deacetylase family. HD type 1 subfamily. Part of the core histone deacetylase (HDAC) complex composed of HDAC1, HDAC2, RBBP4 and RBBP7, the core complex associates with SIN3, SAP18 and SAP30 to form the SIN3 HDAC complex. Component of the nucleosome remodeling and deacetylase (NuRD) repressor complex, composed of core proteins MTA1, MTA2, MTA3, RBBP4, RBBP7, HDAC1, HDAC2, MBD2, MBD3, and peripherally associated proteins CDK2AP1, CDK2AP2, GATAD2A, GATAD2B, CHD3, CHD4 and CHD5. The exact stoichiometry of the NuRD complex is unknown, and some subunits such as MBD2 and MBD3, GATAD2A and GATAD2B, and CHD3, CHD4 and CHD5 define mutually exclusive NuRD complexes. Component of a RCOR/GFI/KDM1A/HDAC complex. Component of a BHC histone deacetylase complex that contains HDAC1, HDAC2, HMG20B, KDM1A, RCOR1 and PHF21A. The BHC complex may also contain ZMYM2, ZNF217, ZMYM3, GSE1 and GTF2I. Part of a complex containing the core histones H2A, H2B, H3 and H4, DEK and unphosphorylated DAXX. Part of a complex containing ATR and CHD4. Forms a heterologous complex at least with YY1. Interacts in the late S-phase of DNA-replication with DNMT1 in the other transcriptional repressor complex composed of DNMT1, DMAP1, PCNA, CAF1. Component of a mSin3A corepressor complex that contains SIN3A, SAP130, SUDS3, ARID4B, HDAC1 and HDAC2. Part of a complex composed of TRIM28, HDAC1, HDAC2 and EHMT2. Part of a complex containing at least CDYL, MIER1, MIER2, HDAC1 and HDAC2. Component of a histone deacetylase complex containing DNTTIP1, ZNF541, HDAC1 and HDAC2. Forms a complex comprising APPL1, RUVBL2, APPL2, CTNNB1 and HDAC1. Interacts directly with GFI1. Interacts directly with GFI1B. Interacts with APEX1; the interaction is not dependent on the acetylated status of APEX1. Interacts with ATR. Interacts with BCL6 (non-acetylated form). Interacts with BEND3. Interacts with CBFA2T3. Interacts with CDK2AP1. Interacts with CHD4. Interacts with CHD5. Interacts with CHFR. Interacts with CRY1. Interacts with DNMT1. Interacts with GATAD2A. Interacts with HCFC1. Interacts with HDAC7. Interacts with HDAC10. Interacts with INSM1. Interacts with KDM4A. Interacts with MACROH2A1 (via the non-histone region). Interacts with MBD3L2. Interacts with MTA1, with a preference for sumoylated MTA1. Interacts with NACC2. Interacts with NRIP1. Interacts with PELP1. Interacts with PIMREG. Interacts with PRDM6. Interacts with PWWP2B. Interacts with SAP30. Interacts with SAP30L. Interacts with SETDB1. Interacts with SIX3. Interacts with SMARCAD1. Interacts with SNW1. Interacts with SPHK2. Interacts with SPEN/MINT. Interacts (CK2 phosphorylated form) with SP3. Interacts with SUV39H1. Interacts with TSHZ3 (via its N-terminus). Interacts with ZMYND8. Interacts with ZNF431. Interacts with ZNF263; recruited to the SIX3 promoter along with other proteins involved in chromatin modification and transcriptional corepression where it contributes to transcriptional repression. Identified in a complex with HDAC1, KCTD19, DNTTIP1 and ZNF541. Component of the SIN3B complex, which includes SIN3B, HDAC2, PHF12 and MORF4L1; interacts directly with all subunits. It depends on Zn(2+) as a cofactor. The cofactor is Ca(2+). In terms of processing, S-nitrosylated by GAPDH. In neurons, S-nitrosylation at Cys-262 and Cys-274 does not affect enzyme activity, but induces HDAC2 release from chromatin. This in turn increases acetylation of histones surrounding neurotrophin-dependent gene promoters and promotes their transcription. In embryonic cortical neurons, S-Nitrosylation regulates dendritic growth and branching. In terms of tissue distribution, widely expressed; lower levels in brain and lung.

The protein localises to the nucleus. The protein resides in the cytoplasm. It catalyses the reaction N(6)-acetyl-L-lysyl-[histone] + H2O = L-lysyl-[histone] + acetate. The enzyme catalyses N(6)-acetyl-L-lysyl-[protein] + H2O = L-lysyl-[protein] + acetate. The catalysed reaction is N(6)-(2E)-butenoyl-L-lysyl-[protein] + H2O = (2E)-2-butenoate + L-lysyl-[protein]. It carries out the reaction N(6)-(2-hydroxyisobutanoyl)-L-lysyl-[protein] + H2O = 2-hydroxy-2-methylpropanoate + L-lysyl-[protein]. It catalyses the reaction N(6)-[(S)-lactoyl]-L-lysyl-[protein] + H2O = (S)-lactate + L-lysyl-[protein]. Its activity is regulated as follows. Inositol tetraphosphate (1D-myo-inositol 1,4,5,6-tetrakisphosphate) may act as an intermolecular glue between HDAC2 and N-Cor repressor complex components. In terms of biological role, histone deacetylase that catalyzes the deacetylation of lysine residues on the N-terminal part of the core histones (H2A, H2B, H3 and H4). Histone deacetylation gives a tag for epigenetic repression and plays an important role in transcriptional regulation, cell cycle progression and developmental events. Histone deacetylases act via the formation of large multiprotein complexes. Forms transcriptional repressor complexes by associating with MAD, SIN3, YY1 and N-COR. Component of a RCOR/GFI/KDM1A/HDAC complex that suppresses, via histone deacetylase (HDAC) recruitment, a number of genes implicated in multilineage blood cell development. Acts as a component of the histone deacetylase NuRD complex which participates in the remodeling of chromatin. Component of the SIN3B complex that represses transcription and counteracts the histone acetyltransferase activity of EP300 through the recognition H3K27ac marks by PHF12 and the activity of the histone deacetylase HDAC2. Also deacetylates non-histone targets: deacetylates TSHZ3, thereby regulating its transcriptional repressor activity. May be involved in the transcriptional repression of circadian target genes, such as PER1, mediated by CRY1 through histone deacetylation. Involved in MTA1-mediated transcriptional corepression of TFF1 and CDKN1A. In addition to protein deacetylase activity, also acts as a protein-lysine deacylase by recognizing other acyl groups: catalyzes removal of (2E)-butenoyl (crotonyl), lactoyl (lactyl) and 2-hydroxyisobutanoyl (2-hydroxyisobutyryl) acyl groups from lysine residues, leading to protein decrotonylation, delactylation and de-2-hydroxyisobutyrylation, respectively. The sequence is that of Histone deacetylase 2 from Homo sapiens (Human).